A 92-amino-acid chain; its full sequence is Small ribosomal subunit protein uS19 (92 aa).

The protein belongs to the universal ribosomal protein uS19 family.

Functionally, protein S19 forms a complex with S13 that binds strongly to the 16S ribosomal RNA. This chain is Small ribosomal subunit protein uS19, found in Hyphomonas neptunium (strain ATCC 15444).